The primary structure comprises 132 residues: MVMTDPIADFLTRIRNANQAKHEVLEVPASNIKKGIATILKNEGFVKNVEFIEDDKQGIIRVFLKYGPNGEKVITNLKRVSKPGLRVYSKREDIPKVLNGLGIAIISTSEGLLTDKQARQKNVGGEVIAYVW.

This sequence belongs to the universal ribosomal protein uS8 family. Part of the 30S ribosomal subunit. Contacts proteins S5 and S12.

Functionally, one of the primary rRNA binding proteins, it binds directly to 16S rRNA central domain where it helps coordinate assembly of the platform of the 30S subunit. The protein is Small ribosomal subunit protein uS8 of Streptococcus suis (strain 98HAH33).